The sequence spans 640 residues: Chaperone protein DnaK (640 aa).

T196 carries the post-translational modification Phosphothreonine; by autocatalysis. 2 disordered regions span residues 487-526 (GKEQSIKIESSSKLTDAEISKMKEDAKEHAAEDQKRKEEI) and 593-640 (SHLY…GNDK). A compositionally biased stretch (basic and acidic residues) spans 501–526 (TDAEISKMKEDAKEHAAEDQKRKEEI). Positions 595–613 (LYQSQGPESSQPETAAQSD) are enriched in polar residues. Over residues 630–640 (AEYEVIDGNDK) the composition is skewed to acidic residues.

Belongs to the heat shock protein 70 family.

Functionally, acts as a chaperone. This chain is Chaperone protein DnaK, found in Pelodictyon phaeoclathratiforme (strain DSM 5477 / BU-1).